Reading from the N-terminus, the 315-residue chain is DNA-directed RNA polymerase subunit alpha (315 aa).

Residues 1–228 (MLEIEKPKIE…EHLRLFIGLT (228 aa)) form an alpha N-terminal domain (alpha-NTD) region. The interval 245-315 (KDKILEMTIE…LGLGFRKADD (71 aa)) is alpha C-terminal domain (alpha-CTD).

It belongs to the RNA polymerase alpha chain family. In terms of assembly, homodimer. The RNAP catalytic core consists of 2 alpha, 1 beta, 1 beta' and 1 omega subunit. When a sigma factor is associated with the core the holoenzyme is formed, which can initiate transcription.

The catalysed reaction is RNA(n) + a ribonucleoside 5'-triphosphate = RNA(n+1) + diphosphate. Functionally, DNA-dependent RNA polymerase catalyzes the transcription of DNA into RNA using the four ribonucleoside triphosphates as substrates. The sequence is that of DNA-directed RNA polymerase subunit alpha from Desulfitobacterium hafniense (strain DSM 10664 / DCB-2).